Reading from the N-terminus, the 614-residue chain is UvrABC system protein C (614 aa).

Residues 14–91 (TSPGCYIHKD…IKENKPKYNI (78 aa)) enclose the GIY-YIG domain. The UVR domain maps to 196 to 231 (DKIIDDLKSKMAVAAQSMEFERAAEYRDLIQAIGTL). Residues 595–614 (LSQVAEERVDYQTEGNHNEP) are disordered. Residues 599-614 (AEERVDYQTEGNHNEP) show a composition bias toward basic and acidic residues.

Belongs to the UvrC family. In terms of assembly, interacts with UvrB in an incision complex.

It localises to the cytoplasm. Its function is as follows. The UvrABC repair system catalyzes the recognition and processing of DNA lesions. UvrC both incises the 5' and 3' sides of the lesion. The N-terminal half is responsible for the 3' incision and the C-terminal half is responsible for the 5' incision. The chain is UvrABC system protein C from Streptococcus pneumoniae serotype 2 (strain D39 / NCTC 7466).